The chain runs to 86 residues: MAHKKGVGSSRNGRDSNPKYLGVKIFGGQAIDAGNIIVRQRGTQFHPGAGVGLGRDHTLFALVDGKVEFSTKGPKKRRTVSVVAEA.

The protein belongs to the bacterial ribosomal protein bL27 family.

The polypeptide is Large ribosomal subunit protein bL27 (Xanthomonas axonopodis pv. citri (strain 306)).